Reading from the N-terminus, the 511-residue chain is Glucans biosynthesis protein G (511 aa).

A signal peptide spans 1-22 (MMKMRWLSAAVMLTLYTSSSWA).

This sequence belongs to the OpgD/OpgG family.

It localises to the periplasm. It functions in the pathway glycan metabolism; osmoregulated periplasmic glucan (OPG) biosynthesis. Its function is as follows. Involved in the biosynthesis of osmoregulated periplasmic glucans (OPGs). The polypeptide is Glucans biosynthesis protein G (mdoG) (Shigella flexneri).